The chain runs to 358 residues: Peptide chain release factor 1 (358 aa).

Gln233 is modified (N5-methylglutamine).

This sequence belongs to the prokaryotic/mitochondrial release factor family. Methylated by PrmC. Methylation increases the termination efficiency of RF1.

The protein localises to the cytoplasm. In terms of biological role, peptide chain release factor 1 directs the termination of translation in response to the peptide chain termination codons UAG and UAA. This is Peptide chain release factor 1 from Listeria monocytogenes serotype 4b (strain CLIP80459).